Consider the following 619-residue polypeptide: 1-deoxy-D-xylulose-5-phosphate synthase (619 aa).

Residues histidine 80 and 121-123 (GHS) each bind thiamine diphosphate. Residue aspartate 152 coordinates Mg(2+). Residues 153 to 154 (GA), asparagine 181, tyrosine 288, and glutamate 370 each bind thiamine diphosphate. Asparagine 181 lines the Mg(2+) pocket.

It belongs to the transketolase family. DXPS subfamily. As to quaternary structure, homodimer. Mg(2+) serves as cofactor. The cofactor is thiamine diphosphate.

It carries out the reaction D-glyceraldehyde 3-phosphate + pyruvate + H(+) = 1-deoxy-D-xylulose 5-phosphate + CO2. It functions in the pathway metabolic intermediate biosynthesis; 1-deoxy-D-xylulose 5-phosphate biosynthesis; 1-deoxy-D-xylulose 5-phosphate from D-glyceraldehyde 3-phosphate and pyruvate: step 1/1. Functionally, catalyzes the acyloin condensation reaction between C atoms 2 and 3 of pyruvate and glyceraldehyde 3-phosphate to yield 1-deoxy-D-xylulose-5-phosphate (DXP). The sequence is that of 1-deoxy-D-xylulose-5-phosphate synthase from Yersinia pseudotuberculosis serotype I (strain IP32953).